Here is a 411-residue protein sequence, read N- to C-terminus: Phosphoribosylaminoimidazole-succinocarboxamide synthase, chloroplastic (411 aa).

A chloroplast-targeting transit peptide spans Met-1–Ser-53.

The protein belongs to the SAICAR synthetase family.

It is found in the plastid. The protein localises to the chloroplast. It carries out the reaction 5-amino-1-(5-phospho-D-ribosyl)imidazole-4-carboxylate + L-aspartate + ATP = (2S)-2-[5-amino-1-(5-phospho-beta-D-ribosyl)imidazole-4-carboxamido]succinate + ADP + phosphate + 2 H(+). Its pathway is purine metabolism; IMP biosynthesis via de novo pathway; 5-amino-1-(5-phospho-D-ribosyl)imidazole-4-carboxamide from 5-amino-1-(5-phospho-D-ribosyl)imidazole-4-carboxylate: step 1/2. The polypeptide is Phosphoribosylaminoimidazole-succinocarboxamide synthase, chloroplastic (PUR7) (Arabidopsis thaliana (Mouse-ear cress)).